Here is a 241-residue protein sequence, read N- to C-terminus: Biosynthetic peptidoglycan transglycosylase (241 aa).

Residues 18 to 38 (GVIGIIALWMAGILIFAFLPV) form a helical membrane-spanning segment.

Belongs to the glycosyltransferase 51 family.

The protein resides in the cell inner membrane. The catalysed reaction is [GlcNAc-(1-&gt;4)-Mur2Ac(oyl-L-Ala-gamma-D-Glu-L-Lys-D-Ala-D-Ala)](n)-di-trans,octa-cis-undecaprenyl diphosphate + beta-D-GlcNAc-(1-&gt;4)-Mur2Ac(oyl-L-Ala-gamma-D-Glu-L-Lys-D-Ala-D-Ala)-di-trans,octa-cis-undecaprenyl diphosphate = [GlcNAc-(1-&gt;4)-Mur2Ac(oyl-L-Ala-gamma-D-Glu-L-Lys-D-Ala-D-Ala)](n+1)-di-trans,octa-cis-undecaprenyl diphosphate + di-trans,octa-cis-undecaprenyl diphosphate + H(+). The protein operates within cell wall biogenesis; peptidoglycan biosynthesis. Functionally, peptidoglycan polymerase that catalyzes glycan chain elongation from lipid-linked precursors. In Yersinia pseudotuberculosis serotype O:1b (strain IP 31758), this protein is Biosynthetic peptidoglycan transglycosylase.